Consider the following 377-residue polypeptide: TraB domain-containing protein (377 aa).

Met-1 carries the post-translational modification N-acetylmethionine. The segment at 1–34 (MEEPEEQPPHEADTEPVVTSGASEAVPRVLPGDP) is disordered. Thr-65 is modified (phosphothreonine).

In Bos taurus (Bovine), this protein is TraB domain-containing protein (TRABD).